Here is a 383-residue protein sequence, read N- to C-terminus: uncharacterized protein (383 aa).

[4Fe-4S] cluster is bound by residues C12, C18, C21, and C88. Residues Q219, F246, E267, and D314 each coordinate S-adenosyl-L-methionine. The active-site Nucleophile is the C341.

This sequence belongs to the class I-like SAM-binding methyltransferase superfamily. RNA M5U methyltransferase family.

This is an uncharacterized protein from Protochlamydia amoebophila (strain UWE25).